We begin with the raw amino-acid sequence, 705 residues long: Glycogen [starch] synthase isoform 2 (705 aa).

Residue R20 participates in UDP binding. S159 carries the post-translational modification Phosphoserine. 2 residues coordinate UDP-alpha-D-glucose: H193 and R199. Alpha-D-glucose 6-phosphate is bound by residues H280, E281, Q283, H286, and K290. Residue R320 coordinates UDP. R320 lines the UDP-alpha-D-glucose pocket. 2 positions are modified to phosphoserine: S363 and S467. An alpha-D-glucose 6-phosphate-binding site is contributed by H500. The UDP-alpha-D-glucose site is built by E509, W511, and G512. Residue T514 coordinates UDP. Alpha-D-glucose 6-phosphate contacts are provided by R583 and R587. S651 carries the phosphoserine modification. The residue at position 655 (S655) is a Phosphoserine; by PHO85. A phosphoserine; by PKA mark is found at S661 and S663. T668 is modified (phosphothreonine; by PHO85). The segment at S686–S705 is disordered. A compositionally biased stretch (acidic residues) spans A693–S705.

The protein belongs to the glycosyltransferase 3 family. Interacts with PCL10. Phosphorylated by the cyclin-CDK PCL10-PHO85. Phosphorylation causes inactivation of enzyme.

The protein resides in the cytoplasm. Its subcellular location is the cytosol. The catalysed reaction is [(1-&gt;4)-alpha-D-glucosyl](n) + UDP-alpha-D-glucose = [(1-&gt;4)-alpha-D-glucosyl](n+1) + UDP + H(+). It functions in the pathway glycan biosynthesis; glycogen biosynthesis. Its activity is regulated as follows. Allosteric activation by glucose-6-phosphate, and phosphorylation by a cAMP-dependent kinase. Its function is as follows. Glycogen synthase participates in the glycogen biosynthetic process along with glycogenin and glycogen branching enzyme. Extends the primer composed of a few glucose units formed by glycogenin by adding new glucose units to it. In this context, glycogen synthase transfers the glycosyl residue from UDP-Glc to the non-reducing end of alpha-1,4-glucan. The protein is Glycogen [starch] synthase isoform 2 (GSY2) of Saccharomyces cerevisiae (strain ATCC 204508 / S288c) (Baker's yeast).